The primary structure comprises 206 residues: Large ribosomal subunit protein mL40 (206 aa).

The N-terminal 46 residues, 1-46 (MTASVLRSISLALRPTSGLLGTWQTQLRETHQRASLLSFWELIPMR), are a transit peptide targeting the mitochondrion. The segment at 168–192 (LFPFEKEGPHYTPPIPNYQPPEGRY) is disordered.

The protein belongs to the mitochondrion-specific ribosomal protein mL40 family. As to quaternary structure, component of the mitochondrial large ribosomal subunit (mt-LSU). Mature mammalian 55S mitochondrial ribosomes consist of a small (28S) and a large (39S) subunit. The 28S small subunit contains a 12S ribosomal RNA (12S mt-rRNA) and 30 different proteins. The 39S large subunit contains a 16S rRNA (16S mt-rRNA), a copy of mitochondrial valine transfer RNA (mt-tRNA(Val)), which plays an integral structural role, and 52 different proteins. mL40 binds to the major groove of the anticodon stem of mt-tRNA(Val) in the central protuberance. Ubiquitous.

The protein resides in the mitochondrion. The polypeptide is Large ribosomal subunit protein mL40 (MRPL40) (Homo sapiens (Human)).